A 230-amino-acid polypeptide reads, in one-letter code: Cytidylate kinase (230 aa).

Gly-12–Thr-20 serves as a coordination point for ATP.

The protein belongs to the cytidylate kinase family. Type 1 subfamily.

Its subcellular location is the cytoplasm. The catalysed reaction is CMP + ATP = CDP + ADP. The enzyme catalyses dCMP + ATP = dCDP + ADP. The sequence is that of Cytidylate kinase from Shewanella sp. (strain MR-4).